The chain runs to 542 residues: 1-aminocyclopropane-1-carboxylate synthase 6 (542 aa).

The interval 1-28 is disordered; the sequence is MRRSGNGGAAKKKKKRSASAASERRPRA. Lys-379 carries the N6-(pyridoxal phosphate)lysine modification.

It belongs to the class-I pyridoxal-phosphate-dependent aminotransferase family. Pyridoxal 5'-phosphate is required as a cofactor. Expressed in leaves.

The protein localises to the plastid. It localises to the amyloplast membrane. The catalysed reaction is S-adenosyl-L-methionine = 1-aminocyclopropane-1-carboxylate + S-methyl-5'-thioadenosine + H(+). Its pathway is alkene biosynthesis; ethylene biosynthesis via S-adenosyl-L-methionine; ethylene from S-adenosyl-L-methionine: step 1/2. Catalyzes the formation of 1-aminocyclopropane-1-carboxylate, a direct precursor of ethylene in higher plants. Required for the regulation of starch grain size in endosperm. The protein is 1-aminocyclopropane-1-carboxylate synthase 6 of Oryza sativa subsp. japonica (Rice).